Reading from the N-terminus, the 283-residue chain is Shikimate dehydrogenase (NADP(+)) (283 aa).

Shikimate contacts are provided by residues 16-18 (SLS) and Thr63. Lys67 (proton acceptor) is an active-site residue. Asp79 is an NADP(+) binding site. Residues Asn88 and Asp103 each contribute to the shikimate site. NADP(+)-binding positions include 128–132 (GAGGA), Ala223, and Gly243.

The protein belongs to the shikimate dehydrogenase family. In terms of assembly, homodimer.

It carries out the reaction shikimate + NADP(+) = 3-dehydroshikimate + NADPH + H(+). It functions in the pathway metabolic intermediate biosynthesis; chorismate biosynthesis; chorismate from D-erythrose 4-phosphate and phosphoenolpyruvate: step 4/7. Functionally, involved in the biosynthesis of the chorismate, which leads to the biosynthesis of aromatic amino acids. Catalyzes the reversible NADPH linked reduction of 3-dehydroshikimate (DHSA) to yield shikimate (SA). This is Shikimate dehydrogenase (NADP(+)) from Xanthomonas oryzae pv. oryzae (strain MAFF 311018).